Reading from the N-terminus, the 206-residue chain is Pyridoxal 5'-phosphate synthase subunit PdxT (206 aa).

59 to 61 (GES) is a binding site for L-glutamine. The active-site Nucleophile is C91. L-glutamine-binding positions include R123 and 151–152 (IR). Catalysis depends on charge relay system residues H187 and E189.

This sequence belongs to the glutaminase PdxT/SNO family. In the presence of PdxS, forms a dodecamer of heterodimers. Only shows activity in the heterodimer.

It catalyses the reaction aldehydo-D-ribose 5-phosphate + D-glyceraldehyde 3-phosphate + L-glutamine = pyridoxal 5'-phosphate + L-glutamate + phosphate + 3 H2O + H(+). The catalysed reaction is L-glutamine + H2O = L-glutamate + NH4(+). It participates in cofactor biosynthesis; pyridoxal 5'-phosphate biosynthesis. Functionally, catalyzes the hydrolysis of glutamine to glutamate and ammonia as part of the biosynthesis of pyridoxal 5'-phosphate. The resulting ammonia molecule is channeled to the active site of PdxS. This is Pyridoxal 5'-phosphate synthase subunit PdxT from Mycobacterium sp. (strain KMS).